We begin with the raw amino-acid sequence, 115 residues long: Large ribosomal subunit protein bL20 (115 aa).

It belongs to the bacterial ribosomal protein bL20 family.

Binds directly to 23S ribosomal RNA and is necessary for the in vitro assembly process of the 50S ribosomal subunit. It is not involved in the protein synthesizing functions of that subunit. This Prochlorococcus marinus (strain SARG / CCMP1375 / SS120) protein is Large ribosomal subunit protein bL20.